Consider the following 243-residue polypeptide: Venom nerve growth factor 1 (243 aa).

Residues 1-18 (MSMLCYTLIIAFLIGIWA) form the signal peptide. The propeptide occupies 19-125 (APKSEDNVPL…TLNRNIRAKR (107 aa)). The span at 47–66 (GLKTSRNTDQRHPAPKKAED) shows a compositional bias: basic and acidic residues. The disordered stretch occupies residues 47–69 (GLKTSRNTDQRHPAPKKAEDQEL). Disulfide bonds link Cys139/Cys204, Cys182/Cys232, and Cys192/Cys234. Asn148 carries an N-linked (GlcNAc...) asparagine glycan.

The protein belongs to the NGF-beta family. Homodimer; non-covalently linked. Expressed by the venom gland.

The protein localises to the secreted. Its function is as follows. Nerve growth factor is important for the development and maintenance of the sympathetic and sensory nervous systems. It stimulates division and differentiation of sympathetic and embryonic sensory neurons as well as basal forebrain cholinergic neurons in the brain. Its relevance in the snake venom is not clear. However, it has been shown to inhibit metalloproteinase-dependent proteolysis of platelet glycoprotein Ib alpha, suggesting a metalloproteinase inhibition to prevent metalloprotease autodigestion and/or protection against prey proteases. Binds a lipid between the two protein chains in the homodimer. The lipid-bound form promotes histamine relase from mouse mast cells, contrary to the lipid-free form. The protein is Venom nerve growth factor 1 of Pseudonaja textilis (Eastern brown snake).